Reading from the N-terminus, the 272-residue chain is Anamorsin homolog (272 aa).

Residues 1–156 are N-terminal SAM-like domain; sequence MDSMMNQKTV…KIGSSFALKK (156 aa). A linker region spans residues 157–185; the sequence is PVTNLFKIDLDDDVDLIDEDSLLTEEDLM. [2Fe-2S] cluster-binding residues include C195, C202, C205, and C207. The fe-S binding site A stretch occupies residues 195-207; sequence CETTKKACKNCVC. [4Fe-4S] cluster contacts are provided by C233, C236, C244, and C247. Short sequence motifs (cx2C motif) lie at residues 233-236 and 244-247; these read CGSC and CGTC. The interval 233 to 247 is fe-S binding site B; it reads CGSCGLGDAFRCGTC.

Belongs to the anamorsin family. As to quaternary structure, monomer. Interacts with ATR3. [2Fe-2S] cluster serves as cofactor. Requires [4Fe-4S] cluster as cofactor.

Its subcellular location is the cytoplasm. It localises to the mitochondrion intermembrane space. Its function is as follows. Component of the cytosolic iron-sulfur (Fe-S) protein assembly (CIA) machinery. Required for the maturation of extramitochondrial Fe-S proteins. Part of an electron transfer chain functioning in an early step of cytosolic Fe-S biogenesis, facilitating the de novo assembly of a [4Fe-4S] cluster on the cytosolic Fe-S scaffold complex. Electrons are transferred from NADPH via FAD- and FMN-containing diflavin oxidoreductase TAH18/ATR3. Together with the diflavin oxidoreductase, also required for the assembly of the diferric tyrosyl radical cofactor of ribonucleotide reductase (RNR), probably by providing electrons for reduction during radical cofactor maturation in the catalytic small subunit. Required for embryo development. This chain is Anamorsin homolog, found in Arabidopsis thaliana (Mouse-ear cress).